Consider the following 149-residue polypeptide: Large ribosomal subunit protein uL15 (149 aa).

Composition is skewed to basic residues over residues 1–14 and 21–30; these read MPTRFSKTRKHRGH and RVGKHRKHPG. The segment at 1–43 is disordered; the sequence is MPTRFSKTRKHRGHVSAGKGRVGKHRKHPGGRGMAGGQHHHRT.

It belongs to the universal ribosomal protein uL15 family. As to quaternary structure, component of the large ribosomal subunit (LSU). Mature N.crassa ribosomes consist of a small (40S) and a large (60S) subunit. The 40S small subunit contains 1 molecule of ribosomal RNA (18S rRNA) and at least 32 different proteins. The large 60S subunit contains 3 rRNA molecules (26S, 5.8S and 5S rRNA) and at least 42 different proteins.

The protein localises to the cytoplasm. Its function is as follows. Component of the ribosome, a large ribonucleoprotein complex responsible for the synthesis of proteins in the cell. The small ribosomal subunit (SSU) binds messenger RNAs (mRNAs) and translates the encoded message by selecting cognate aminoacyl-transfer RNA (tRNA) molecules. The large subunit (LSU) contains the ribosomal catalytic site termed the peptidyl transferase center (PTC), which catalyzes the formation of peptide bonds, thereby polymerizing the amino acids delivered by tRNAs into a polypeptide chain. The nascent polypeptides leave the ribosome through a tunnel in the LSU and interact with protein factors that function in enzymatic processing, targeting, and the membrane insertion of nascent chains at the exit of the ribosomal tunnel. The sequence is that of Large ribosomal subunit protein uL15 (rpl-28) from Neurospora crassa (strain ATCC 24698 / 74-OR23-1A / CBS 708.71 / DSM 1257 / FGSC 987).